The primary structure comprises 102 residues: ATP-dependent Clp protease adapter protein ClpS (102 aa).

Belongs to the ClpS family. In terms of assembly, binds to the N-terminal domain of the chaperone ClpA.

Involved in the modulation of the specificity of the ClpAP-mediated ATP-dependent protein degradation. This chain is ATP-dependent Clp protease adapter protein ClpS, found in Janthinobacterium sp. (strain Marseille) (Minibacterium massiliensis).